The following is a 471-amino-acid chain: Cleavage and polyadenylation specificity factor subunit 7 (471 aa).

Positions 34–68 are disordered; that stretch reads VLTAASQPSDDRSSSTEPPPPVRQEPAPKPNNKTP. Positions 50–62 are enriched in pro residues; sequence EPPPPVRQEPAPK. An RRM domain is found at 82-162; the sequence is AAVYVGSFSW…EKVDVRPATR (81 aa). The segment at 176 to 220 is disordered; sequence ECVRVPRGGIPPRAHSRDSSDSADGRATPSENLVPSSARVDKPPS. Basic and acidic residues predominate over residues 190-199; sequence HSRDSSDSAD. The residue at position 203 (Thr203) is a Phosphothreonine. Residue Ser205 is modified to Phosphoserine. Lys354 participates in a covalent cross-link: Glycyl lysine isopeptide (Lys-Gly) (interchain with G-Cter in SUMO2). The tract at residues 409–471 is disordered; sequence SVGASGSSSR…HRDRERDRHH (63 aa). A phosphoserine mark is found at Ser413 and Ser423. The arg/Ser-rich domain stretch occupies residues 418-469; it reads RKRHRSRERSPSRSRESSRRHRDLLHNEDRHDDYFQERNREHERHRDRERDR. Composition is skewed to basic and acidic residues over residues 425-434 and 441-471; these read ERSPSRSRES and LLHNEDRHDDYFQERNREHERHRDRERDRHH.

It belongs to the RRM CPSF6/7 family. As to quaternary structure, component of the cleavage factor Im (CFIm) complex which is a heterotetramer composed of two subunits of NUDT21/CPSF5 and two subunits of CPSF6 or CPSF7 or a heterodimer of CPSF6 and CPSF7. The cleavage factor Im (CFIm) complex associates with the CPSF and CSTF complexes to promote the assembly of the core mRNA 3'-processing machinery. Interacts with NUDT21/CPSF5. Interacts (via Arg/Ser-rich domain) with FIP1L1 (preferentially via unphosphorylated form and Arg/Glu/Asp-rich region); this interaction mediates, at least in part, the interaction between the CFIm and CPSF complexes and may be inhibited by CPSF7 hyper-phosphorylation. Post-translationally, phosphorylated. Asymmetrically dimethylated on arginine residues by PRMT1.

Its subcellular location is the nucleus. The protein localises to the cytoplasm. Its function is as follows. Component of the cleavage factor Im (CFIm) complex that functions as an activator of the pre-mRNA 3'-end cleavage and polyadenylation processing required for the maturation of pre-mRNA into functional mRNAs. CFIm contributes to the recruitment of multiprotein complexes on specific sequences on the pre-mRNA 3'-end, so called cleavage and polyadenylation signals (pA signals). Most pre-mRNAs contain multiple pA signals, resulting in alternative cleavage and polyadenylation (APA) producing mRNAs with variable 3'-end formation. The CFIm complex acts as a key regulator of cleavage and polyadenylation site choice during APA through its binding to 5'-UGUA-3' elements localized in the 3'-untranslated region (UTR) for a huge number of pre-mRNAs. CPSF7 activates directly the mRNA 3'-processing machinery. Binds to pA signals in RNA substrates. This Mus musculus (Mouse) protein is Cleavage and polyadenylation specificity factor subunit 7.